The chain runs to 162 residues: Putative pre-16S rRNA nuclease (162 aa).

It belongs to the YqgF nuclease family.

Its subcellular location is the cytoplasm. Functionally, could be a nuclease involved in processing of the 5'-end of pre-16S rRNA. In Brucella melitensis biotype 1 (strain ATCC 23456 / CCUG 17765 / NCTC 10094 / 16M), this protein is Putative pre-16S rRNA nuclease.